An 86-amino-acid polypeptide reads, in one-letter code: Apolipoprotein C-I (86 aa).

The signal sequence occupies residues 1–26; the sequence is MRLFLSLPVLVVALLMILEGPGPAQG.

The protein belongs to the apolipoprotein C1 family.

It is found in the secreted. Its function is as follows. Inhibitor of lipoprotein binding to the low density lipoprotein (LDL) receptor, LDL receptor-related protein, and very low density lipoprotein (VLDL) receptor. Associates with high density lipoproteins (HDL) and the triacylglycerol-rich lipoproteins in the plasma and makes up about 10% of the protein of the VLDL and 2% of that of HDL. Appears to interfere directly with fatty acid uptake and is also the major plasma inhibitor of cholesteryl ester transfer protein (CETP). Binds free fatty acids and reduces their intracellular esterification. Modulates the interaction of APOE with beta-migrating VLDL and inhibits binding of beta-VLDL to the LDL receptor-related protein. The polypeptide is Apolipoprotein C-I (APOC1) (Aotus nancymaae (Ma's night monkey)).